A 103-amino-acid polypeptide reads, in one-letter code: Small ribosomal subunit protein uS10 (103 aa).

Belongs to the universal ribosomal protein uS10 family. In terms of assembly, part of the 30S ribosomal subunit.

Functionally, involved in the binding of tRNA to the ribosomes. In Psychrobacter arcticus (strain DSM 17307 / VKM B-2377 / 273-4), this protein is Small ribosomal subunit protein uS10.